Reading from the N-terminus, the 207-residue chain is Probable GTP-binding protein EngB (207 aa).

Residues 23 to 197 form the EngB-type G domain; it reads AGIEVVFAGR…ETVIGRWLFA (175 aa). GTP-binding positions include 31 to 38, 58 to 62, 76 to 79, 143 to 146, and 176 to 178; these read GRSNAGKS, GRTQL, DLPG, TKAD, and FSS. Mg(2+) is bound by residues Ser-38 and Thr-60.

It belongs to the TRAFAC class TrmE-Era-EngA-EngB-Septin-like GTPase superfamily. EngB GTPase family. The cofactor is Mg(2+).

Functionally, necessary for normal cell division and for the maintenance of normal septation. The polypeptide is Probable GTP-binding protein EngB (Methylobacillus flagellatus (strain ATCC 51484 / DSM 6875 / VKM B-1610 / KT)).